The primary structure comprises 345 residues: Probable deoxyhypusine synthase 2 (345 aa).

K292 (nucleophile) is an active-site residue.

It belongs to the deoxyhypusine synthase family. Requires NAD(+) as cofactor.

It catalyses the reaction [eIF5A protein]-L-lysine + spermidine = [eIF5A protein]-deoxyhypusine + propane-1,3-diamine. The protein operates within protein modification; eIF5A hypusination. Functionally, catalyzes the NAD-dependent oxidative cleavage of spermidine and the subsequent transfer of the butylamine moiety of spermidine to the epsilon-amino group of a specific lysine residue of the eIF-5A precursor protein to form the intermediate deoxyhypusine residue. This chain is Probable deoxyhypusine synthase 2 (dys2), found in Methanosarcina acetivorans (strain ATCC 35395 / DSM 2834 / JCM 12185 / C2A).